Here is a 251-residue protein sequence, read N- to C-terminus: Hydroxyacylglutathione hydrolase (251 aa).

The Zn(2+) site is built by His53, His55, Asp57, His58, His110, Asp127, and His165.

It belongs to the metallo-beta-lactamase superfamily. Glyoxalase II family. As to quaternary structure, monomer. Zn(2+) is required as a cofactor.

It carries out the reaction an S-(2-hydroxyacyl)glutathione + H2O = a 2-hydroxy carboxylate + glutathione + H(+). Its pathway is secondary metabolite metabolism; methylglyoxal degradation; (R)-lactate from methylglyoxal: step 2/2. Functionally, thiolesterase that catalyzes the hydrolysis of S-D-lactoyl-glutathione to form glutathione and D-lactic acid. This chain is Hydroxyacylglutathione hydrolase, found in Salmonella typhi.